Here is a 413-residue protein sequence, read N- to C-terminus: Multifunctional CCA protein (413 aa).

2 residues coordinate ATP: Gly8 and Arg11. Positions 8 and 11 each coordinate CTP. Mg(2+) is bound by residues Asp21 and Asp23. ATP-binding residues include Arg91, Arg137, and Arg140. CTP is bound by residues Arg91, Arg137, and Arg140. The 102-residue stretch at 228–329 folds into the HD domain; sequence TGVHTLMTLS…VKLFDAIDAW (102 aa).

It belongs to the tRNA nucleotidyltransferase/poly(A) polymerase family. Bacterial CCA-adding enzyme type 1 subfamily. In terms of assembly, monomer. Can also form homodimers and oligomers. The cofactor is Mg(2+). Requires Ni(2+) as cofactor.

The catalysed reaction is a tRNA precursor + 2 CTP + ATP = a tRNA with a 3' CCA end + 3 diphosphate. It carries out the reaction a tRNA with a 3' CCA end + 2 CTP + ATP = a tRNA with a 3' CCACCA end + 3 diphosphate. In terms of biological role, catalyzes the addition and repair of the essential 3'-terminal CCA sequence in tRNAs without using a nucleic acid template. Adds these three nucleotides in the order of C, C, and A to the tRNA nucleotide-73, using CTP and ATP as substrates and producing inorganic pyrophosphate. tRNA 3'-terminal CCA addition is required both for tRNA processing and repair. Also involved in tRNA surveillance by mediating tandem CCA addition to generate a CCACCA at the 3' terminus of unstable tRNAs. While stable tRNAs receive only 3'-terminal CCA, unstable tRNAs are marked with CCACCA and rapidly degraded. This Salmonella paratyphi A (strain ATCC 9150 / SARB42) protein is Multifunctional CCA protein.